The chain runs to 810 residues: Calpain-3 (810 aa).

A compositionally biased stretch (low complexity) spans 9 to 27 (VAQQTAAGSVPSTTSTTTE). The tract at residues 9 to 31 (VAQQTAAGSVPSTTSTTTEGTGG) is disordered. Residues 68–410 (LYEDPDFPPN…FTKLEICNLT (343 aa)) form the Calpain catalytic domain. Catalysis depends on residues Cys-123, His-327, and Asn-351. The tract at residues 411-579 (PDTLEADKLQ…KRSLSEEVEN (169 aa)) is domain III. The tract at residues 578–639 (ENMIEADRPS…SAKAREKSEE (62 aa)) is disordered. The linker stretch occupies residues 580 to 638 (MIEADRPSKKKKGKPIIFVSDRANSNKELTTDEDAGKDGEKTHVDEKKRSSAKAREKSE). Residues 613–639 (DAGKDGEKTHVDEKKRSSAKAREKSEE) show a composition bias toward basic and acidic residues. 4 EF-hand domains span residues 638–672 (EEETQFRNIFRQIAGDDMEICREELRNVLNNVVKK), 681–714 (FELESSRSMIALMDTDGSGKINFDEFRHLWDKIK), 711–746 (DKIKSWQKIFKHYDADHSGTINSYEMRNAVKDAGFR), and 776–810 (VRLDAMFRAFHAFDKDGDGIIKLNVLEWLQLTMYA). Residues 639 to 809 (EETQFRNIFR…VLEWLQLTMY (171 aa)) form a domain IV region. Ca(2+) contacts are provided by Ala-651, Asp-654, Glu-656, Glu-661, Asp-694, Asp-696, Ser-698, Lys-700, Glu-705, Asp-724, Asp-726, Ser-728, Thr-730, Glu-735, Asp-789, Asp-791, Asp-793, and Ile-795.

This sequence belongs to the peptidase C2 family. As to quaternary structure, homodimer; via EF-hand domain 4. Interacts with TTN/titin. Interacts with CMYA5; this interaction, which results in CMYA5 proteolysis, may protect CAPN3 from autolysis. Interacts with SIMC1. Interacts with UTP25; the interaction is required for CAPN3 translocation to the nucleolus. In terms of tissue distribution, skeletal muscle. Low levels in spleen, intestine and bone.

It localises to the cytoplasm. It is found in the nucleus. The protein localises to the nucleolus. It catalyses the reaction Broad endopeptidase activity.. Its activity is regulated as follows. Activated by micromolar concentrations of calcium and inhibited by calpastatin. Calcium-regulated non-lysosomal thiol-protease. Proteolytically cleaves CTBP1. Mediates, with UTP25, the proteasome-independent degradation of p53/TP53. The polypeptide is Calpain-3 (CAPN3) (Gallus gallus (Chicken)).